The primary structure comprises 345 residues: Platelet-derived growth factor C (345 aa).

The N-terminal stretch at Met-1–Ala-22 is a signal peptide. N-linked (GlcNAc...) asparagine glycans are attached at residues Asn-25 and Asn-55. Positions His-46 to Leu-163 constitute a CUB domain. Disulfide bonds link Cys-104/Cys-124, Cys-250/Cys-294, Cys-280/Cys-335, and Cys-287/Cys-337.

It belongs to the PDGF/VEGF growth factor family. In terms of assembly, homodimer; disulfide-linked. Interacts with PDGFRA homodimers, and with heterodimers formed by PDGFRA and PDGFRB. Post-translationally, proteolytic removal of the N-terminal CUB domain releasing the core domain is necessary for unmasking the receptor-binding epitopes of the core domain. Cleavage after basic residues in the hinge region (region connecting the CUB and growth factor domains) gives rise to the receptor-binding form.

It is found in the secreted. Growth factor that plays an essential role in the regulation of embryonic development, cell proliferation, cell migration, survival and chemotaxis. Potent mitogen and chemoattractant for cells of mesenchymal origin. Required for normal skeleton formation during embryonic development. Required for normal skin morphogenesis during embryonic development. Plays an important role in wound healing, in angiogenesis and blood vessel development. This Gekko japonicus (Schlegel's Japanese gecko) protein is Platelet-derived growth factor C (PDGFC).